A 437-amino-acid polypeptide reads, in one-letter code: ATP-dependent RNA helicase RhlB (437 aa).

The short motif at 9–37 is the Q motif element; that stretch reads QKFADLGLEPTVLEGLDAQGFHYCTPIQA. The Helicase ATP-binding domain occupies 40-219; sequence LPVVLTGQDI…FEHMNSPESV (180 aa). 53 to 60 serves as a coordination point for ATP; it reads AQTGTGKT. Positions 165–168 match the DEAD box motif; it reads DEAD. Residues 245 to 390 form the Helicase C-terminal domain; sequence RLLQTLIEEE…LSKYNSEALL (146 aa). The tract at residues 395–437 is disordered; it reads APLRLQRTPRQGGNRRPNGNRQGQGQSRPRNNNRRHPQSQKQQ. Positions 400–424 are enriched in low complexity; that stretch reads QRTPRQGGNRRPNGNRQGQGQSRPR. Positions 425-437 are enriched in basic residues; that stretch reads NNNRRHPQSQKQQ.

It belongs to the DEAD box helicase family. RhlB subfamily. In terms of assembly, component of the RNA degradosome, which is a multiprotein complex involved in RNA processing and mRNA degradation.

It localises to the cytoplasm. The catalysed reaction is ATP + H2O = ADP + phosphate + H(+). Its function is as follows. DEAD-box RNA helicase involved in RNA degradation. Has RNA-dependent ATPase activity and unwinds double-stranded RNA. The protein is ATP-dependent RNA helicase RhlB of Photobacterium profundum (strain SS9).